We begin with the raw amino-acid sequence, 65 residues long: Large ribosomal subunit protein uL29 (65 aa).

The protein belongs to the universal ribosomal protein uL29 family.

The protein is Large ribosomal subunit protein uL29 of Syntrophus aciditrophicus (strain SB).